A 274-amino-acid chain; its full sequence is Energy-coupling factor transporter ATP-binding protein EcfA1 (274 aa).

Positions 10–241 constitute an ABC transporter domain; it reads ASFQGVYFSY…AAELQKIRLD (232 aa). 42-49 lines the ATP pocket; the sequence is GHNGSGKS.

This sequence belongs to the ABC transporter superfamily. Energy-coupling factor EcfA family. Forms a stable energy-coupling factor (ECF) transporter complex composed of 2 membrane-embedded substrate-binding proteins (S component), 2 ATP-binding proteins (A component) and 2 transmembrane proteins (T component).

It localises to the cell membrane. In terms of biological role, ATP-binding (A) component of a common energy-coupling factor (ECF) ABC-transporter complex. Unlike classic ABC transporters this ECF transporter provides the energy necessary to transport a number of different substrates. The chain is Energy-coupling factor transporter ATP-binding protein EcfA1 from Mycoplasma pneumoniae (strain ATCC 29342 / M129 / Subtype 1) (Mycoplasmoides pneumoniae).